Here is a 453-residue protein sequence, read N- to C-terminus: UDP-N-acetylmuramoylalanine--D-glutamate ligase (453 aa).

119-125 (GSNGKTT) provides a ligand contact to ATP.

Belongs to the MurCDEF family.

It is found in the cytoplasm. It carries out the reaction UDP-N-acetyl-alpha-D-muramoyl-L-alanine + D-glutamate + ATP = UDP-N-acetyl-alpha-D-muramoyl-L-alanyl-D-glutamate + ADP + phosphate + H(+). Its pathway is cell wall biogenesis; peptidoglycan biosynthesis. In terms of biological role, cell wall formation. Catalyzes the addition of glutamate to the nucleotide precursor UDP-N-acetylmuramoyl-L-alanine (UMA). The polypeptide is UDP-N-acetylmuramoylalanine--D-glutamate ligase (Streptococcus uberis (strain ATCC BAA-854 / 0140J)).